The sequence spans 212 residues: Uracil phosphoribosyltransferase (212 aa).

Residues arginine 78, arginine 103, and 130–138 (DPMLATGSS) each bind 5-phospho-alpha-D-ribose 1-diphosphate. Uracil is bound by residues isoleucine 193 and 198 to 200 (GDA). A 5-phospho-alpha-D-ribose 1-diphosphate-binding site is contributed by aspartate 199.

It belongs to the UPRTase family. Mg(2+) is required as a cofactor.

It carries out the reaction UMP + diphosphate = 5-phospho-alpha-D-ribose 1-diphosphate + uracil. It participates in pyrimidine metabolism; UMP biosynthesis via salvage pathway; UMP from uracil: step 1/1. Its activity is regulated as follows. Allosterically activated by GTP. Its function is as follows. Catalyzes the conversion of uracil and 5-phospho-alpha-D-ribose 1-diphosphate (PRPP) to UMP and diphosphate. The chain is Uracil phosphoribosyltransferase from Pseudomonas syringae pv. tomato (strain ATCC BAA-871 / DC3000).